Here is a 519-residue protein sequence, read N- to C-terminus: Cytochrome P450 72C1 (519 aa).

Residues 10-30 (VFLIGFLILILNWVWRAVNWV) traverse the membrane as a helical segment. Cys-467 is a binding site for heme.

This sequence belongs to the cytochrome P450 family. It depends on heme as a cofactor. In terms of tissue distribution, expressed in hypocotyls, roots, cotyledons, stamens and silique junctions.

The protein localises to the membrane. Functionally, atypical cytochrome P450 involved in brassinosteroids (BRs) inactivation and regulation of BRs homeostasis. Does not possess carbon 26 hydroxylase activity and may inactivate BRs by hydroxylation of carbons other than C-26. Acts in association with CYP734A1 to inactivate BRs and modulate photomorphogenesis. This chain is Cytochrome P450 72C1 (CYP72C1), found in Arabidopsis thaliana (Mouse-ear cress).